The chain runs to 95 residues: Aspartyl/glutamyl-tRNA(Asn/Gln) amidotransferase subunit C (95 aa).

Belongs to the GatC family. In terms of assembly, heterotrimer of A, B and C subunits.

The enzyme catalyses L-glutamyl-tRNA(Gln) + L-glutamine + ATP + H2O = L-glutaminyl-tRNA(Gln) + L-glutamate + ADP + phosphate + H(+). It carries out the reaction L-aspartyl-tRNA(Asn) + L-glutamine + ATP + H2O = L-asparaginyl-tRNA(Asn) + L-glutamate + ADP + phosphate + 2 H(+). Functionally, allows the formation of correctly charged Asn-tRNA(Asn) or Gln-tRNA(Gln) through the transamidation of misacylated Asp-tRNA(Asn) or Glu-tRNA(Gln) in organisms which lack either or both of asparaginyl-tRNA or glutaminyl-tRNA synthetases. The reaction takes place in the presence of glutamine and ATP through an activated phospho-Asp-tRNA(Asn) or phospho-Glu-tRNA(Gln). The polypeptide is Aspartyl/glutamyl-tRNA(Asn/Gln) amidotransferase subunit C (Rhodopseudomonas palustris (strain ATCC BAA-98 / CGA009)).